The following is a 441-amino-acid chain: Ribulose bisphosphate carboxylase large chain (441 aa).

Residue Lys4 is modified to N6,N6,N6-trimethyllysine. The substrate site is built by Asn113 and Thr163. Lys165 functions as the Proton acceptor in the catalytic mechanism. Lys167 is a substrate binding site. Positions 191, 193, and 194 each coordinate Mg(2+). Lys191 bears the N6-carboxylysine mark. His284 (proton acceptor) is an active-site residue. Residues Arg285, His317, and Ser369 each contribute to the substrate site.

The protein belongs to the RuBisCO large chain family. Type I subfamily. In terms of assembly, heterohexadecamer of 8 large chains and 8 small chains; disulfide-linked. The disulfide link is formed within the large subunit homodimers. Requires Mg(2+) as cofactor. Post-translationally, the disulfide bond which can form in the large chain dimeric partners within the hexadecamer appears to be associated with oxidative stress and protein turnover.

Its subcellular location is the plastid. The protein localises to the chloroplast. It catalyses the reaction 2 (2R)-3-phosphoglycerate + 2 H(+) = D-ribulose 1,5-bisphosphate + CO2 + H2O. The catalysed reaction is D-ribulose 1,5-bisphosphate + O2 = 2-phosphoglycolate + (2R)-3-phosphoglycerate + 2 H(+). Its function is as follows. RuBisCO catalyzes two reactions: the carboxylation of D-ribulose 1,5-bisphosphate, the primary event in carbon dioxide fixation, as well as the oxidative fragmentation of the pentose substrate in the photorespiration process. Both reactions occur simultaneously and in competition at the same active site. This chain is Ribulose bisphosphate carboxylase large chain, found in Heliamphora nutans (Venezuelan marsh pitcher plant).